The following is a 962-amino-acid chain: Protein lin-36 (962 aa).

Disordered regions lie at residues 1–53 and 74–99; these read MSEE…ETEG and TSSGEVLDESQVTPTKQASSSQPREE. Over residues 23–40 the composition is skewed to basic and acidic residues; the sequence is DSHVTVHSVEQDSQHSGE. A compositionally biased stretch (polar residues) spans 74–95; sequence TSSGEVLDESQVTPTKQASSSQ. The segment at 161-249 adopts a THAP-type zinc-finger fold; the sequence is LTHKPCTVCN…IEAFGVPVAI (89 aa). 2 stretches are compositionally biased toward basic and acidic residues: residues 452 to 472 and 534 to 570; these read KAEESAQGTKEQESSQKKHAE and SHEEEHDPTPESVEREPTVSPNDPRERLRLKERDEQF. Disordered stretches follow at residues 452 to 575, 612 to 676, 744 to 788, and 932 to 962; these read KAEE…KMVQ, IAAT…PEER, QEKG…SASS, and DPKWRELQQQQQQQQQQQEQFPGQGSSDSQQ. A compositionally biased stretch (low complexity) spans 626–637; that stretch reads SSEQTPEPTTSQ. The segment covering 647–658 has biased composition (basic and acidic residues); that stretch reads KTKESAVQKVEK. Residues 939–951 are compositionally biased toward low complexity; it reads QQQQQQQQQQQEQ. A compositionally biased stretch (polar residues) spans 952–962; the sequence is FPGQGSSDSQQ.

As to expression, expressed in vulval precursor P(3-8).p cells and their descendants, neurons of the head, tail and ventral cord, hypodermal and intestinal cells and germline cells.

It localises to the nucleus. In terms of biological role, required to negatively regulate vulval development. Antagonizes Ras-mediated vulval induction. Acts cell autonomously. This Caenorhabditis elegans protein is Protein lin-36 (lin-36).